The primary structure comprises 350 residues: 2-oxoglutarate-dependent ethylene/succinate-forming enzyme (350 aa).

One can recognise a Fe2OG dioxygenase domain in the interval G166 to P286. 2 residues coordinate Fe cation: H189 and H268.

The protein belongs to the iron/ascorbate-dependent oxidoreductase family. Monomer. Fe(2+) serves as cofactor.

It catalyses the reaction 2-oxoglutarate + O2 + 2 H(+) = ethene + 3 CO2 + H2O. The catalysed reaction is L-arginine + 2-oxoglutarate + O2 = guanidine + L-glutamate 5-semialdehyde + succinate + CO2. Its pathway is alkene biosynthesis; ethylene biosynthesis via 2-oxoglutarate. In terms of biological role, simultaneously catalyzes two reactions, namely formation of ethylene and of succinate from 2-oxoglutarate. The polypeptide is 2-oxoglutarate-dependent ethylene/succinate-forming enzyme (efe) (Pseudomonas amygdali pv. sesami (Pseudomonas syringae pv. sesami)).